The following is a 102-amino-acid chain: Small ribosomal subunit protein uS10 (102 aa).

The segment at 35–58 (SGPIPLPTKTLEIPSRKSPDGEGT) is disordered.

It belongs to the universal ribosomal protein uS10 family. As to quaternary structure, part of the 30S ribosomal subunit.

Involved in the binding of tRNA to the ribosomes. The protein is Small ribosomal subunit protein uS10 of Halorubrum lacusprofundi (strain ATCC 49239 / DSM 5036 / JCM 8891 / ACAM 34).